A 559-amino-acid chain; its full sequence is CTP synthase (559 aa).

Residues 1–270 (MTKFVFVTGG…DGLICDKLRI (270 aa)) are amidoligase domain. S13 is a CTP binding site. Residue S13 coordinates UTP. ATP contacts are provided by residues 14-19 (SLGKGI) and D71. Residues D71 and E144 each contribute to the Mg(2+) site. CTP is bound by residues 151 to 153 (DIE), 191 to 196 (KTKPTQ), and K227. UTP contacts are provided by residues 191-196 (KTKPTQ) and K227. In terms of domain architecture, Glutamine amidotransferase type-1 spans 295–547 (SIAMVGKYVD…IKAALDHKAR (253 aa)). An L-glutamine-binding site is contributed by G356. C383 serves as the catalytic Nucleophile; for glutamine hydrolysis. Residues 384–387 (LGMQ), E407, and R473 each bind L-glutamine. Residues H520 and E522 contribute to the active site.

Belongs to the CTP synthase family. In terms of assembly, homotetramer.

It carries out the reaction UTP + L-glutamine + ATP + H2O = CTP + L-glutamate + ADP + phosphate + 2 H(+). The enzyme catalyses L-glutamine + H2O = L-glutamate + NH4(+). The catalysed reaction is UTP + NH4(+) + ATP = CTP + ADP + phosphate + 2 H(+). Its pathway is pyrimidine metabolism; CTP biosynthesis via de novo pathway; CTP from UDP: step 2/2. With respect to regulation, allosterically activated by GTP, when glutamine is the substrate; GTP has no effect on the reaction when ammonia is the substrate. The allosteric effector GTP functions by stabilizing the protein conformation that binds the tetrahedral intermediate(s) formed during glutamine hydrolysis. Inhibited by the product CTP, via allosteric rather than competitive inhibition. Catalyzes the ATP-dependent amination of UTP to CTP with either L-glutamine or ammonia as the source of nitrogen. Regulates intracellular CTP levels through interactions with the four ribonucleotide triphosphates. The protein is CTP synthase of Variovorax paradoxus (strain S110).